Here is a 546-residue protein sequence, read N- to C-terminus: Crossover junction endonuclease EME1A (546 aa).

Disordered regions lie at residues 1-55 and 88-232; these read MSDF…FLDE and VISL…REKQ. Residues 28-49 are compositionally biased toward polar residues; it reads PTDLNLDTEPSLQKQPPGSAST. 2 stretches are compositionally biased toward basic and acidic residues: residues 103–120 and 149–167; these read SSKKYEPVYTDSWKKPCR and DAIEVDSDHEKEDTGVEKM. A compositionally biased stretch (polar residues) spans 173–183; it reads TITSKSTSLSA. Residues 188-245 adopt a coiled-coil conformation; that stretch reads KKKMSKDEKTRAAEEKKLQKEQEKLQKAASKAEDAEHKKLEREKQKWAKEKDKALKCI. The segment covering 192–232 has biased composition (basic and acidic residues); it reads SKDEKTRAAEEKKLQKEQEKLQKAASKAEDAEHKKLEREKQ. One can recognise an ERCC4 domain in the interval 278-478; the sequence is NPIQRSIVWT…PSLKSLLKVY (201 aa).

The protein belongs to the EME1/MMS4 family. Forms a heterodimer with MUS81. It depends on Mg(2+) as a cofactor. The cofactor is Ca(2+).

The protein resides in the nucleus. Interacts with MUS81 to form a DNA structure-specific endonuclease with substrate preference for branched DNA structures with a 5'-end at the branch nick. Typical substrates include 3'-flap structures, D-loops, replication forks, nicked Holliday junctions and also intact Holliday junctions with a reduced efficiency. May be required in mitosis for the processing of stalled or collapsed replication fork intermediates. Plays a role in DNA repair and in genotoxic stress-induced homologous recombination (HR) in somatic cells. Mediates a subset of meiotic recombination events that are insensitive to crossover interference. This chain is Crossover junction endonuclease EME1A (EME1A), found in Arabidopsis thaliana (Mouse-ear cress).